A 252-amino-acid chain; its full sequence is uncharacterized protein (252 aa).

Belongs to the GSP E family.

This is an uncharacterized protein from Methanocaldococcus jannaschii (strain ATCC 43067 / DSM 2661 / JAL-1 / JCM 10045 / NBRC 100440) (Methanococcus jannaschii).